We begin with the raw amino-acid sequence, 137 residues long: DNA-binding protein H-NS (137 aa).

Residues 112 to 117 mediate DNA binding; it reads QGRTPA.

This sequence belongs to the histone-like protein H-NS family. Homodimer that oligomerizes on DNA into higher-order complexes that form bridges between disparate regions of DNA compacting it. Interacts with Hha, YdgT and StpA.

It is found in the cytoplasm. The protein localises to the nucleoid. A DNA-binding protein implicated in transcriptional repression and chromosome organization and compaction. Binds nucleation sites in AT-rich DNA and bridges them, forming higher-order nucleoprotein complexes and condensing the chromosome. As many horizontally transferred genes are AT-rich, it plays a central role in silencing foreign genes. A subset of genes are repressed by H-NS in association with other proteins. This is DNA-binding protein H-NS (hns) from Salmonella paratyphi A (strain ATCC 9150 / SARB42).